The sequence spans 192 residues: Fe/S biogenesis protein NfuA (192 aa).

Residues Cys149 and Cys152 each contribute to the [4Fe-4S] cluster site.

Belongs to the NfuA family. Homodimer. It depends on [4Fe-4S] cluster as a cofactor.

In terms of biological role, involved in iron-sulfur cluster biogenesis. Binds a 4Fe-4S cluster, can transfer this cluster to apoproteins, and thereby intervenes in the maturation of Fe/S proteins. Could also act as a scaffold/chaperone for damaged Fe/S proteins. The chain is Fe/S biogenesis protein NfuA from Shewanella oneidensis (strain ATCC 700550 / JCM 31522 / CIP 106686 / LMG 19005 / NCIMB 14063 / MR-1).